The sequence spans 76 residues: Heat shock factor-binding protein 1 (76 aa).

Belongs to the HSBP1 family. In terms of assembly, homohexamer. Associates with heptad repeats of HSF1 trimers and probably also HSF1 monomers, and with HSP70. Association with HSF1 trimers and HSP70 coincides with attenuation of heat shock response and the conversion of HSF1 trimer to monomer.

It localises to the nucleus. Its function is as follows. Negative regulator of the heat shock response. Negatively affects HSF1 DNA-binding activity. May have a role in the suppression of the activation of the stress response during the aging process. The polypeptide is Heat shock factor-binding protein 1 (HSBP1) (Bos taurus (Bovine)).